The chain runs to 800 residues: Heterogeneous nuclear ribonucleoprotein U (800 aa).

Position 2 is an N-acetylserine (S2). A Phosphoserine modification is found at S4. In terms of domain architecture, SAP spans 8 to 42; it reads VKKLKVSELKEELKKRRLSDKGLKADLMDRLQAAL. Residues K17 and K21 each carry the N6-acetyllysine modification. The segment at 41-257 is disordered; sequence ALDNEAGGRP…PQPPVEEEDE (217 aa). S58 is modified (phosphoserine). Low complexity-rich tracts occupy residues 71–80 and 103–113; these read AGLEQEAAAG and ENGAAGAADAG. Composition is skewed to acidic residues over residues 114–128 and 134–147; these read AMEE…ENGD and EGED…EGAG. Residues 153 to 173 show a composition bias toward low complexity; that stretch reads GEQQSQPPAAAAQQQPSQQRG. At K181 the chain carries N6-acetyllysine. S182 carries the post-translational modification ADP-ribosylserine. Residues 194-205 show a composition bias toward low complexity; that stretch reads APPGARQGQQQA. The span at 209–242 shows a compositional bias: basic and acidic residues; the sequence is GKTEQKGGDKKRGVKRPREDHGRGYFEYIEENKY. Residue R231 is modified to Citrulline. K241 is subject to N6-acetyllysine; alternate. K241 is covalently cross-linked (Glycyl lysine isopeptide (Lys-Gly) (interchain with G-Cter in SUMO1); alternate). Residue K241 forms a Glycyl lysine isopeptide (Lys-Gly) (interchain with G-Cter in SUMO2); alternate linkage. Position 242 is a phosphotyrosine (Y242). Residues S243 and S247 each carry the phosphoserine modification. The region spanning 244–440 is the B30.2/SPRY domain; the sequence is RAKSPQPPVE…VEFNFGQKEK (197 aa). T262 carries the phosphothreonine modification. K328 is subject to N6-acetyllysine. Residues 464–648 form an ATPase domain region; sequence PKGPEEKKDC…QKLLEQYKEE (185 aa). A Glycyl lysine isopeptide (Lys-Gly) (interchain with G-Cter in SUMO2) cross-link involves residue K471. 480–487 contributes to the ATP binding site; sequence GLPGAGKT. Residues K492 and K500 each carry the N6-acetyllysine; alternate modification. Glycyl lysine isopeptide (Lys-Gly) (interchain with G-Cter in SUMO2); alternate cross-links involve residues K492 and K500. At T508 the chain carries Phosphothreonine. Residue K512 forms a Glycyl lysine isopeptide (Lys-Gly) (interchain with G-Cter in SUMO2) linkage. N6-acetyllysine is present on K527. K541 is subject to N6-acetyllysine; alternate. K541 is covalently cross-linked (Glycyl lysine isopeptide (Lys-Gly) (interchain with G-Cter in SUMO2); alternate). Residue K550 forms a Glycyl lysine isopeptide (Lys-Gly) (interchain with G-Cter in SUMO2) linkage. T558 carries the phosphothreonine modification. Glycyl lysine isopeptide (Lys-Gly) (interchain with G-Cter in SUMO2) cross-links involve residues K585 and K602. The interval 587 to 602 is actin-binding; it reads EDYKQRTQKKAEVEGK. K611 is modified (N6-acetyllysine; alternate). K611 is covalently cross-linked (Glycyl lysine isopeptide (Lys-Gly) (interchain with G-Cter in SUMO2); alternate). A coiled-coil region spans residues 626-653; that stretch reads DEITYVELQKEEAQKLLEQYKEESKKAL. Residues K640 and K646 each participate in a glycyl lysine isopeptide (Lys-Gly) (interchain with G-Cter in SUMO2) cross-link. Residues 647 to 659 show a composition bias toward basic and acidic residues; that stretch reads EESKKALPPEKKQ. The interval 647-729 is disordered; the sequence is EESKKALPPE…GSGGIGYPYP (83 aa). R678 is modified (omega-N-methylarginine). Gly residues predominate over residues 686 to 704; that stretch reads GGFNMRGGNFRGGAPGNRG. Residues 690-715 are RNA-binding RGG-box; it reads MRGGNFRGGAPGNRGGYNRRGNMPQR. Asymmetric dimethylarginine is present on residues R691, R696, and R703. Residues R709 and R715 each carry the asymmetric dimethylarginine; alternate modification. An omega-N-methylarginine; alternate mark is found at R709 and R715. A compositionally biased stretch (gly residues) spans 715 to 725; that stretch reads RGGGGGSGGIG. An asymmetric dimethylarginine mark is found at R730 and R737. The segment at 745-774 is disordered; it reads NYNRGGMPNRGNYNQNFRGRGNNRGYKNQS. Residue K789 is modified to N6-acetyllysine; alternate. Residue K789 forms a Glycyl lysine isopeptide (Lys-Gly) (interchain with G-Cter in SUMO2); alternate linkage.

In terms of assembly, oligomer (via ATPase domain and RNA-binding RGG-box region); oligomerization occurs upon ATP-binding in a chromatin-associated RNAs (caRNAs)- and transcription-dependent manner and is required for chromatin decompaction. ATP hydrolysis is required to cycle from an oligomeric to monomeric state to compact chromatin. Component of the coding region determinant (CRD)-mediated complex, composed of DHX9, HNRNPU, IGF2BP1, SYNCRIP and YBX1. Identified in the spliceosome C complex. Identified in a IGF2BP1-dependent mRNP granule complex containing untranslated mRNAs. Associates with heterogeneous nuclear ribonucleoprotein (hnRNP) particles. Associates (via middle region) with the C-terminal domain (CTD) RNA polymerase II (Pol II) holoenzyme; this association occurs in a RNA-independent manner. Associates (via middle region) with the core-TFIIH basal transcription factor complex; this association inhibits the CTD phosphorylation of RNA polymerase II holoenzyme by down-regulating TFIIH kinase activity. Associates with the telomerase holoenzyme complex. Associates with spindle microtubules (MTs) in a TPX2-dependent manner. Interacts (via C-terminus) with actin; this interaction is direct and mediates association with the phosphorylated CTD of RNA polymerase II and is disrupted in presence of the long non-coding H19 RNA. Interacts with AURKA. Interacts (via C-terminus) with CBX5; this interaction is, at least in part, RNA-dependent. Interacts with CR2. Interacts with CRY1. Interacts (via C-terminus) with EP300; this interaction enhances DNA-binding to nuclear scaffold/matrix attachment region (S/MAR) elements. Interacts with ERBB4. Interacts with GEMIN5. Interacts with IGF2BP1. Interacts with IGF2BP2 and IGF2BP3. Interacts with NCL; this interaction occurs during mitosis. Interacts (via C-terminus) with NR3C1 (via C-terminus). Interacts with PLK1; this interaction induces phosphorylation of HNRNPU at Ser-58 in mitosis. Interacts with POU3F4. Interacts with SMARCA4; this interaction occurs in embryonic stem cells and stimulates global Pol II-mediated transcription. Interacts (via C-terminus) with TOP2A; this interaction protects the topoisomerase TOP2A from degradation and positively regulates the relaxation of supercoiled DNA by TOP2A in a RNA-dependent manner. Interacts with TPX2; this interaction recruits HNRNPU to spindle microtubules (MTs). Interacts with UBQLN2. Interacts (via RNA-binding RGG-box region) with ZBTB7B; the interaction facilitates the recruitment of long non-coding RNA Blnc1 by ZBTB7B. Interacts with ERCC6. In terms of processing, cleaved at Asp-94 by CASP3 during T-cell apoptosis, resulting in a loss of DNA- and chromatin-binding activities. Extensively phosphorylated. Phosphorylated on Ser-58 by PLK1 and dephosphorylated by protein phosphatase 2A (PP2A) in mitosis. Post-translationally, arg-709 and Arg-715 are dimethylated, probably to asymmetric dimethylarginine. In terms of processing, citrullinated by PADI4.

It localises to the nucleus. The protein localises to the nucleus matrix. The protein resides in the chromosome. It is found in the nucleus speckle. Its subcellular location is the cytoplasm. It localises to the cytoskeleton. The protein localises to the microtubule organizing center. The protein resides in the centrosome. It is found in the centromere. Its subcellular location is the kinetochore. It localises to the spindle. The protein localises to the spindle pole. The protein resides in the midbody. It is found in the cell surface. Its subcellular location is the cytoplasmic granule. In terms of biological role, DNA- and RNA-binding protein involved in several cellular processes such as nuclear chromatin organization, telomere-length regulation, transcription, mRNA alternative splicing and stability, Xist-mediated transcriptional silencing and mitotic cell progression. Plays a role in the regulation of interphase large-scale gene-rich chromatin organization through chromatin-associated RNAs (caRNAs) in a transcription-dependent manner, and thereby maintains genomic stability. Required for the localization of the long non-coding Xist RNA on the inactive chromosome X (Xi) and the subsequent initiation and maintenance of X-linked transcriptional gene silencing during X-inactivation. Plays a role as a RNA polymerase II (Pol II) holoenzyme transcription regulator. Promotes transcription initiation by direct association with the core-TFIIH basal transcription factor complex for the assembly of a functional pre-initiation complex with Pol II in a actin-dependent manner. Blocks Pol II transcription elongation activity by inhibiting the C-terminal domain (CTD) phosphorylation of Pol II and dissociates from Pol II pre-initiation complex prior to productive transcription elongation. Positively regulates CBX5-induced transcriptional gene silencing and retention of CBX5 in the nucleus. Negatively regulates glucocorticoid-mediated transcriptional activation. Key regulator of transcription initiation and elongation in embryonic stem cells upon leukemia inhibitory factor (LIF) signaling. Involved in the long non-coding RNA H19-mediated Pol II transcriptional repression. Participates in the circadian regulation of the core clock component BMAL1 transcription. Plays a role in the regulation of telomere length. Plays a role as a global pre-mRNA alternative splicing modulator by regulating U2 small nuclear ribonucleoprotein (snRNP) biogenesis. Plays a role in mRNA stability. Component of the CRD-mediated complex that promotes MYC mRNA stabilization. Enhances the expression of specific genes, such as tumor necrosis factor TNFA, by regulating mRNA stability, possibly through binding to the 3'-untranslated region (UTR). Plays a role in mitotic cell cycle regulation. Involved in the formation of stable mitotic spindle microtubules (MTs) attachment to kinetochore, spindle organization and chromosome congression. Phosphorylation at Ser-58 by PLK1 is required for chromosome alignement and segregation and progression through mitosis. Also contributes to the targeting of AURKA to mitotic spindle MTs. Binds to double- and single-stranded DNA and RNA, poly(A), poly(C) and poly(G) oligoribonucleotides. Binds to chromatin-associated RNAs (caRNAs). Associates with chromatin to scaffold/matrix attachment region (S/MAR) elements in a chromatin-associated RNAs (caRNAs)-dependent manner. Binds (via RNA-binding RGG-box region) to the long non-coding Xist RNA; this binding is direct and bridges the Xist RNA and the inactive chromosome X (Xi). Binds the long non-coding H19 RNA. Binds to SMN1/2 pre-mRNAs at G/U-rich regions. Binds to small nuclear RNAs (snRNAs). Binds to the 3'-UTR of TNFA mRNA. Also negatively regulates embryonic stem cell differentiation upon LIF signaling. Required for embryonic development. Binds to brown fat long non-coding RNA 1 (Blnc1); facilitates the recruitment of Blnc1 by ZBTB7B required to drive brown and beige fat development and thermogenesis. This is Heterogeneous nuclear ribonucleoprotein U from Mus musculus (Mouse).